The following is a 159-amino-acid chain: Endoribonuclease YbeY (159 aa).

Residues histidine 124, histidine 128, and histidine 134 each coordinate Zn(2+).

This sequence belongs to the endoribonuclease YbeY family. Zn(2+) serves as cofactor.

It localises to the cytoplasm. Functionally, single strand-specific metallo-endoribonuclease involved in late-stage 70S ribosome quality control and in maturation of the 3' terminus of the 16S rRNA. This chain is Endoribonuclease YbeY, found in Halalkalibacterium halodurans (strain ATCC BAA-125 / DSM 18197 / FERM 7344 / JCM 9153 / C-125) (Bacillus halodurans).